Here is a 347-residue protein sequence, read N- to C-terminus: Anthranilate phosphoribosyltransferase (347 aa).

5-phospho-alpha-D-ribose 1-diphosphate-binding positions include Gly-88, 91–92 (GD), Thr-96, 98–101 (NIST), 116–124 (KHGNRSVSS), and Ser-128. Gly-88 serves as a coordination point for anthranilate. Ser-100 is a binding site for Mg(2+). Asn-119 is a binding site for anthranilate. An anthranilate-binding site is contributed by Arg-174. Asp-232 and Glu-233 together coordinate Mg(2+).

This sequence belongs to the anthranilate phosphoribosyltransferase family. In terms of assembly, homodimer. Mg(2+) is required as a cofactor.

The catalysed reaction is N-(5-phospho-beta-D-ribosyl)anthranilate + diphosphate = 5-phospho-alpha-D-ribose 1-diphosphate + anthranilate. Its pathway is amino-acid biosynthesis; L-tryptophan biosynthesis; L-tryptophan from chorismate: step 2/5. In terms of biological role, catalyzes the transfer of the phosphoribosyl group of 5-phosphorylribose-1-pyrophosphate (PRPP) to anthranilate to yield N-(5'-phosphoribosyl)-anthranilate (PRA). The polypeptide is Anthranilate phosphoribosyltransferase (Shewanella sp. (strain MR-4)).